We begin with the raw amino-acid sequence, 61 residues long: Large ribosomal subunit protein eL24 (61 aa).

The Zn(2+) site is built by C7, C10, C33, and C37. A C4-type zinc finger spans residues 7–37 (CSFCGHEIPPGTGLMYVRNDGTILWFCSSKC).

The protein belongs to the eukaryotic ribosomal protein eL24 family. As to quaternary structure, part of the 50S ribosomal subunit. Forms a cluster with proteins L3 and L14. It depends on Zn(2+) as a cofactor.

In terms of biological role, binds to the 23S rRNA. The polypeptide is Large ribosomal subunit protein eL24 (Saccharolobus islandicus (strain Y.N.15.51 / Yellowstone #2) (Sulfolobus islandicus)).